The sequence spans 181 residues: Protein GrpE (181 aa).

Over residues 1 to 12 (MENTQENPTTPS) the composition is skewed to polar residues. The tract at residues 1-33 (MENTQENPTTPSAEDIGSEKQAAQGAAPAAEAA) is disordered. Over residues 21–33 (QAAQGAAPAAEAA) the composition is skewed to low complexity.

This sequence belongs to the GrpE family. Homodimer.

It is found in the cytoplasm. Participates actively in the response to hyperosmotic and heat shock by preventing the aggregation of stress-denatured proteins, in association with DnaK and GrpE. It is the nucleotide exchange factor for DnaK and may function as a thermosensor. Unfolded proteins bind initially to DnaJ; upon interaction with the DnaJ-bound protein, DnaK hydrolyzes its bound ATP, resulting in the formation of a stable complex. GrpE releases ADP from DnaK; ATP binding to DnaK triggers the release of the substrate protein, thus completing the reaction cycle. Several rounds of ATP-dependent interactions between DnaJ, DnaK and GrpE are required for fully efficient folding. The chain is Protein GrpE from Burkholderia cenocepacia (strain HI2424).